The following is a 386-amino-acid chain: Large ribosomal subunit protein uL4 (386 aa).

Residues 341 to 357 show a composition bias toward basic and acidic residues; sequence VEQRRLKEKQAKLDQKR. The interval 341–386 is disordered; the sequence is VEQRRLKEKQAKLDQKRGIATPVEGAGKGRPRKTTAKPTKAKAGKK. Residues 369–386 are compositionally biased toward basic residues; sequence GRPRKTTAKPTKAKAGKK.

The protein belongs to the universal ribosomal protein uL4 family.

The sequence is that of Large ribosomal subunit protein uL4 (RPL4) from Urechis caupo (Innkeeper worm).